A 209-amino-acid polypeptide reads, in one-letter code: Dual specificity protein phosphatase 22 (209 aa).

The 141-residue stretch at G4–H144 folds into the Tyrosine-protein phosphatase domain. The active-site Phosphocysteine intermediate is the C88. The disordered stretch occupies residues L169–S192. A compositionally biased stretch (polar residues) spans A177–W190.

It belongs to the protein-tyrosine phosphatase family. Non-receptor class dual specificity subfamily.

The protein resides in the cytoplasm. Its subcellular location is the nucleus. The catalysed reaction is O-phospho-L-tyrosyl-[protein] + H2O = L-tyrosyl-[protein] + phosphate. The enzyme catalyses O-phospho-L-seryl-[protein] + H2O = L-seryl-[protein] + phosphate. It catalyses the reaction O-phospho-L-threonyl-[protein] + H2O = L-threonyl-[protein] + phosphate. Its function is as follows. Activates the Jnk signaling pathway. Dephosphorylates and deactivates p38 and stress-activated protein kinase/c-Jun N-terminal kinase (SAPK/JNK). The chain is Dual specificity protein phosphatase 22 (dusp22) from Xenopus laevis (African clawed frog).